A 1143-amino-acid chain; its full sequence is FH2 domain-containing protein 1 (1143 aa).

The segment at 16-89 (GNIATAPGFM…PPTTHMNGYS (74 aa)) is disordered. Pro residues-rich tracts occupy residues 29 to 46 (TPPP…PSPP) and 56 to 80 (SSPP…PGLP). Residues 87–482 (GYSHLGKKKR…QLQRLKEQEQ (396 aa)) enclose the FH2 domain. Phosphoserine is present on Ser-500. The disordered stretch occupies residues 517–638 (PFLHPRPISP…NHASAFPRAR (122 aa)). The segment covering 521–534 (PRPISPSSPSYRPP) has biased composition (low complexity). 3 positions are modified to phosphoserine: Ser-650, Ser-660, and Ser-664. Positions 706-1143 (LESVGHRGPQ…LGRILNPLRK (438 aa)) are disordered. Positions 806–818 (GSMSSGVGEMGDS) are enriched in low complexity. The span at 848–861 (LPRDKPTKRKDVVA) shows a compositional bias: basic and acidic residues. Residues 925-947 (RGPSQNPPSSTDTVWSRQNSVRR) are compositionally biased toward polar residues. Residues 958–968 (PRGSSGSSSTR) are compositionally biased toward low complexity. Positions 960 to 1086 (GSSGSSSTRP…DAAPKDSSTL (127 aa)) are MTBD; microtubule-binding domain. Basic and acidic residues predominate over residues 995–1018 (QKPEENKTCRAHSEGPESPKEEPK). The segment covering 1036-1046 (ARNTVASSSRS) has biased composition (polar residues). Basic and acidic residues-rich tracts occupy residues 1071 to 1080 (VKGDPEDAAP) and 1117 to 1130 (GAGE…KDSS).

As to quaternary structure, interacts with CEP170.

It is found in the cell projection. The protein resides in the cilium. The protein localises to the golgi apparatus. Functionally, microtubule-associated formin which regulates both actin and microtubule dynamics. Induces microtubule acetylation and stabilization and actin stress fiber formation. Regulates Golgi ribbon formation. Required for normal cilia assembly. Early in cilia assembly, may assist in the maturation and positioning of the centrosome/basal body, and once cilia assembly has initiated, may also promote cilia elongation by inhibiting disassembly. The sequence is that of FH2 domain-containing protein 1 (FHDC1) from Homo sapiens (Human).